The primary structure comprises 179 residues: Apoptosis regulator Bcl-2 homolog (179 aa).

Positions Glu-76–Ala-95 match the BH1 motif. The BH2 signature appears at Pro-126 to Ser-141.

It belongs to the Bcl-2 family. In terms of assembly, interacts with host BECN1 (via BH3 homology domain); this interaction allows the virus to inhibit BECN1, and thus autophagy. Interacts with host BID. Interacts with host BAX.

It is found in the host mitochondrion. Its subcellular location is the host endoplasmic reticulum. Suppresses apoptosis in host cell to promote the viral replication. Has the ability to potentially bind to all the members of the proapoptotic Bcl-2 family. Inhibits autophagy by interacting with host Beclin 1 (BECN1). The polypeptide is Apoptosis regulator Bcl-2 homolog (Ornithodoros (relapsing fever ticks)).